A 275-amino-acid chain; its full sequence is 3-methyl-2-oxobutanoate hydroxymethyltransferase (275 aa).

Positions 49 and 88 each coordinate Mg(2+). 3-methyl-2-oxobutanoate is bound by residues 49-50, Asp88, and Lys118; that span reads DS. Glu120 is a Mg(2+) binding site. Glu187 serves as the catalytic Proton acceptor.

The protein belongs to the PanB family. Homodecamer; pentamer of dimers. The cofactor is Mg(2+).

It is found in the cytoplasm. It catalyses the reaction 3-methyl-2-oxobutanoate + (6R)-5,10-methylene-5,6,7,8-tetrahydrofolate + H2O = 2-dehydropantoate + (6S)-5,6,7,8-tetrahydrofolate. The protein operates within cofactor biosynthesis; (R)-pantothenate biosynthesis; (R)-pantoate from 3-methyl-2-oxobutanoate: step 1/2. Its function is as follows. Catalyzes the reversible reaction in which hydroxymethyl group from 5,10-methylenetetrahydrofolate is transferred onto alpha-ketoisovalerate to form ketopantoate. The chain is 3-methyl-2-oxobutanoate hydroxymethyltransferase from Bartonella quintana (strain Toulouse) (Rochalimaea quintana).